The following is a 419-amino-acid chain: S-adenosylmethionine synthase (419 aa).

Position 15 (H15) interacts with ATP. D17 serves as a coordination point for Mg(2+). E43 lines the K(+) pocket. Residues E56 and Q100 each coordinate L-methionine. Residues 100–110 (QSPDIAQGVDE) form a flexible loop region. ATP-binding positions include 171–173 (DGK), 248–249 (KF), D257, 263–264 (RK), A280, and K284. An L-methionine-binding site is contributed by D257. K288 lines the L-methionine pocket.

This sequence belongs to the AdoMet synthase family. As to quaternary structure, homotetramer; dimer of dimers. Requires Mg(2+) as cofactor. It depends on K(+) as a cofactor.

It is found in the cytoplasm. It catalyses the reaction L-methionine + ATP + H2O = S-adenosyl-L-methionine + phosphate + diphosphate. Its pathway is amino-acid biosynthesis; S-adenosyl-L-methionine biosynthesis; S-adenosyl-L-methionine from L-methionine: step 1/1. Functionally, catalyzes the formation of S-adenosylmethionine (AdoMet) from methionine and ATP. The overall synthetic reaction is composed of two sequential steps, AdoMet formation and the subsequent tripolyphosphate hydrolysis which occurs prior to release of AdoMet from the enzyme. The polypeptide is S-adenosylmethionine synthase (Synechococcus sp. (strain CC9311)).